The chain runs to 362 residues: MPHNPIRVVVGPANYFSHPGSFNHLHDFFTDEQLSRAVWIYGKRAIAAAQTKLPPAFGLPGAKHILFRGHCSESDVQQLAAESGDDRSVVIGVGGGALLDTAKALARRLGLPFVAVPTIAATCAAWTPLSVWYNDAGQALHYEIFDDANFMVLVEPEIILNAPQQYLLAGIGDTLAKWYEAVVLAPQPETLPLTVRLGINNAQAIRDVLLNSSEQALSDQQNQQLTQSFCDVVDAIIAGGGMVGGLGDRFTRVAAAHAVHNGLTVLPQTEKFLHGTKVAYGILVQSALLGQDDVLAQLTGAYQRFHLPTTLAELEVDINNQAEIDKVIAHTLRPVESIHYLPVTLTPDTLRAAFKKVESFKA.

Zn(2+) is bound by residues D173, H257, and H274.

It belongs to the iron-containing alcohol dehydrogenase family. Zn(2+) serves as cofactor.

It carries out the reaction 2-hydroxybutanoate + NADP(+) = 2-oxobutanoate + NADPH + H(+). The enzyme catalyses 2-hydroxyglutarate + NADP(+) = 2-oxoglutarate + NADPH + H(+). Catalyzes the NADPH-dependent reduction of 2-oxoglutarate and 2-oxobutanoate, leading to the respective 2-hydroxycarboxylate. Cannot use NADH instead of NADPH as a redox partner. Do not catalyze the reverse reactions. The chain is Hydroxycarboxylate dehydrogenase A from Escherichia coli (strain K12).